Reading from the N-terminus, the 653-residue chain is Sodium-dependent phosphate transporter 2 (653 aa).

Position 1 (Met1) is a topological domain, extracellular. A helical transmembrane segment spans residues 2–22; that stretch reads VLVEYLWMVIVGFIIAFILAF. Residues 23 to 46 are Cytoplasmic-facing; the sequence is SVGANDVANSFGTAVGSGVVTLRQ. Residues 47 to 67 form a helical membrane-spanning segment; that stretch reads ACILASIFETTGSVLLGAKVG. At 68-86 the chain is on the extracellular side; sequence ETIRKGIIDVNLYNNTVDL. Asn81 carries N-linked (GlcNAc...) asparagine glycosylation. The helical transmembrane segment at 87 to 107 threads the bilayer; it reads LMAGEVSAMVGSAVWQLIASF. Residues 108–109 are Cytoplasmic-facing; sequence LR. Residues 110–130 form a helical membrane-spanning segment; it reads LPISGTHCIVGATIGFSLVAI. Topologically, residues 131–142 are extracellular; the sequence is GTHGVQWMQLVK. Residues 143–163 traverse the membrane as a helical segment; it reads IVASWFISPLLSGLMSGALFL. The Cytoplasmic segment spans residues 164 to 187; that stretch reads MIKFFILKKEDPVPNGLKALPVFY. Residues 188–208 form a helical membrane-spanning segment; the sequence is AATIGINVFSILYTGAPLLGL. Over 209-217 the chain is Extracellular; that stretch reads ESFPVWATA. Residues 218–238 form a helical membrane-spanning segment; sequence LLSIGIAIIFALIVWFFVCPW. The Cytoplasmic segment spans residues 239-483; that stretch reads MKKKIASRLK…EDKEEKDKSE (245 aa). A helical membrane pass occupies residues 484–504; that stretch reads VHLLFHFLQILTACFGSFAHG. The Extracellular segment spans residues 505–532; that stretch reads GNDVSNAIGPLVALWLIYEQGGVMQEAS. A helical transmembrane segment spans residues 533 to 553; sequence TPVWLLLYGGVGICAGLWVWG. At 554–572 the chain is on the cytoplasmic side; sequence RRVIQTMGKDLTPITPSSG. The chain crosses the membrane as a helical span at residues 573 to 587; sequence FTIELASAFTVVVAS. Residues 588 to 594 are Extracellular-facing; the sequence is NIGLPIS. A helical membrane pass occupies residues 595 to 610; the sequence is TTHCKVGSVVAVGWIR. Residues 611 to 622 are Cytoplasmic-facing; it reads SRKAVDWRLFRN. The helical transmembrane segment at 623-643 threads the bilayer; the sequence is IFLAWFVTVPVAGLFSAGVMA. Residues 644 to 653 lie on the Extracellular side of the membrane; sequence ILQYGILPYV.

This sequence belongs to the inorganic phosphate transporter (PiT) (TC 2.A.20) family. In terms of assembly, homodimer.

The protein localises to the cell membrane. Its subcellular location is the apical cell membrane. It carries out the reaction 2 Na(+)(out) + phosphate(out) = 2 Na(+)(in) + phosphate(in). Sodium-phosphate symporter which preferentially transports the monovalent form of phosphate with a stoichiometry of two sodium ions per phosphate ion. This Xenopus tropicalis (Western clawed frog) protein is Sodium-dependent phosphate transporter 2 (slc20a2).